The following is a 959-amino-acid chain: Probable LRR receptor-like serine/threonine-protein kinase At5g37450 (959 aa).

An N-terminal signal peptide occupies residues 1-24; it reads MKEMMGVVGIILVVSSCCLSLLDA. At 25-565 the chain is on the extracellular side; sequence QEITHPTDVS…SGMSIGVSVG (541 aa). N-linked (GlcNAc...) asparagine glycosylation is found at Asn-62, Asn-88, Asn-102, and Asn-123. LRR repeat units lie at residues 79–100, 101–124, 125–148, 149–172, 173–198, 200–220, 221–244, 246–268, and 269–292; these read VKEL…LGLL, SNLT…LGNL, THLI…LGSL, SNLL…LANL, KKLK…TLTN, LHFL…LAQM, PSLR…SYGS, PNLV…LSKS, and LVLY…KFSA. A glycan (N-linked (GlcNAc...) asparagine) is linked at Asn-182. Asn-293, Asn-311, Asn-327, Asn-358, Asn-369, and Asn-510 each carry an N-linked (GlcNAc...) asparagine glycan. LRR repeat units follow at residues 294–314, 315–338, and 341–366; these read ITTI…NFSG, LPRL…IWEN, and LKAE…LLNP. A helical transmembrane segment spans residues 566–586; that stretch reads IIIGAIAFFLVLSSLALVFFI. The Cytoplasmic segment spans residues 587–959; that stretch reads KRSKRKRKTR…SGVIPSIAPR (373 aa). Residues 631-906 enclose the Protein kinase domain; it reads FSDLSQIGRG…RELENIYGLI (276 aa). Residues 637-645 and Lys-659 each bind ATP; that span reads IGRGGYGKV. The active-site Proton acceptor is Asp-755.

The protein belongs to the protein kinase superfamily. Ser/Thr protein kinase family.

The protein resides in the membrane. The enzyme catalyses L-seryl-[protein] + ATP = O-phospho-L-seryl-[protein] + ADP + H(+). The catalysed reaction is L-threonyl-[protein] + ATP = O-phospho-L-threonyl-[protein] + ADP + H(+). The protein is Probable LRR receptor-like serine/threonine-protein kinase At5g37450 of Arabidopsis thaliana (Mouse-ear cress).